The primary structure comprises 287 residues: Large ribosomal subunit protein uL5m (287 aa).

The N-terminal 18 residues, 1 to 18 (MLGIRKNIRISVNFLQRR), are a transit peptide targeting the mitochondrion. The segment covering 80–89 (DEHTQKDRLP) has biased composition (basic and acidic residues). A disordered region spans residues 80-109 (DEHTQKDRLPRWIGDNPYYKNRPPQKMRGN).

The protein belongs to the universal ribosomal protein uL5 family. Component of the mitochondrial large ribosomal subunit (mt-LSU). Mature yeast 74S mitochondrial ribosomes consist of a small (37S) and a large (54S) subunit. The 37S small subunit contains a 15S ribosomal RNA (15S mt-rRNA) and at least 32 different proteins. The 54S large subunit contains a 21S rRNA (21S mt-rRNA) and at least 45 different proteins. Unlike bacterial L5, uL5m does not bind zinc.

The protein resides in the mitochondrion. Functionally, component of the mitochondrial ribosome (mitoribosome), a dedicated translation machinery responsible for the synthesis of mitochondrial genome-encoded proteins, including at least some of the essential transmembrane subunits of the mitochondrial respiratory chain. The mitoribosomes are attached to the mitochondrial inner membrane and translation products are cotranslationally integrated into the membrane. This chain is Large ribosomal subunit protein uL5m (mrpl7), found in Schizosaccharomyces pombe (strain 972 / ATCC 24843) (Fission yeast).